The primary structure comprises 955 residues: Glycine dehydrogenase (decarboxylating) (955 aa).

Lys-705 is modified (N6-(pyridoxal phosphate)lysine).

It belongs to the GcvP family. The glycine cleavage system is composed of four proteins: P, T, L and H. Pyridoxal 5'-phosphate serves as cofactor.

It catalyses the reaction N(6)-[(R)-lipoyl]-L-lysyl-[glycine-cleavage complex H protein] + glycine + H(+) = N(6)-[(R)-S(8)-aminomethyldihydrolipoyl]-L-lysyl-[glycine-cleavage complex H protein] + CO2. In terms of biological role, the glycine cleavage system catalyzes the degradation of glycine. The P protein binds the alpha-amino group of glycine through its pyridoxal phosphate cofactor; CO(2) is released and the remaining methylamine moiety is then transferred to the lipoamide cofactor of the H protein. The chain is Glycine dehydrogenase (decarboxylating) from Aliivibrio salmonicida (strain LFI1238) (Vibrio salmonicida (strain LFI1238)).